Here is a 154-residue protein sequence, read N- to C-terminus: OCIA domain-containing protein 2 (154 aa).

Residues 1 to 120 (MASVSTHGNQ…HSFEDQLRGA (120 aa)) form the OCIA domain. Position 41 is an N6-acetyllysine (Lys41).

In terms of assembly, interacts (via OCIA domain) with OCIAD1/ASRIJ and STAT3. In terms of tissue distribution, abundant in kidney, liver and brain.

Its subcellular location is the endosome. The protein resides in the mitochondrion. It localises to the mitochondrion inner membrane. Functionally, has an essential role in the assembly of mitochondrial respiratory chain complex III. Is also required for STAT3 activation and plays a role in cell migration. This Mus musculus (Mouse) protein is OCIA domain-containing protein 2 (Ociad2).